A 106-amino-acid chain; its full sequence is Large ribosomal subunit protein uL24 (106 aa).

Belongs to the universal ribosomal protein uL24 family. In terms of assembly, part of the 50S ribosomal subunit.

Functionally, one of two assembly initiator proteins, it binds directly to the 5'-end of the 23S rRNA, where it nucleates assembly of the 50S subunit. Its function is as follows. One of the proteins that surrounds the polypeptide exit tunnel on the outside of the subunit. This chain is Large ribosomal subunit protein uL24, found in Acinetobacter baylyi (strain ATCC 33305 / BD413 / ADP1).